We begin with the raw amino-acid sequence, 618 residues long: DNA mismatch repair protein MutL (618 aa).

The span at 367–378 (EPTAAREPATPR) shows a compositional bias: low complexity. The tract at residues 367–402 (EPTAAREPATPRYSGGASGGNGGRQTAGGWPHAQPG) is disordered. Residues 382–392 (GASGGNGGRQT) show a composition bias toward gly residues.

It belongs to the DNA mismatch repair MutL/HexB family.

Functionally, this protein is involved in the repair of mismatches in DNA. It is required for dam-dependent methyl-directed DNA mismatch repair. May act as a 'molecular matchmaker', a protein that promotes the formation of a stable complex between two or more DNA-binding proteins in an ATP-dependent manner without itself being part of a final effector complex. This is DNA mismatch repair protein MutL from Salmonella choleraesuis (strain SC-B67).